Here is an 82-residue protein sequence, read N- to C-terminus: RNA-binding protein Hfq (82 aa).

The region spanning 9–69 (DHFLNQLRKE…ISTFSPARNV (61 aa)) is the Sm domain.

Belongs to the Hfq family. As to quaternary structure, homohexamer.

Functionally, RNA chaperone that binds small regulatory RNA (sRNAs) and mRNAs to facilitate mRNA translational regulation in response to envelope stress, environmental stress and changes in metabolite concentrations. Also binds with high specificity to tRNAs. The protein is RNA-binding protein Hfq of Exiguobacterium sp. (strain ATCC BAA-1283 / AT1b).